A 248-amino-acid polypeptide reads, in one-letter code: 1-(5-phosphoribosyl)-5-[(5-phosphoribosylamino)methylideneamino] imidazole-4-carboxamide isomerase (248 aa).

Asp7 acts as the Proton acceptor in catalysis. The active-site Proton donor is Asp131.

Belongs to the HisA/HisF family.

The protein localises to the cytoplasm. It catalyses the reaction 1-(5-phospho-beta-D-ribosyl)-5-[(5-phospho-beta-D-ribosylamino)methylideneamino]imidazole-4-carboxamide = 5-[(5-phospho-1-deoxy-D-ribulos-1-ylimino)methylamino]-1-(5-phospho-beta-D-ribosyl)imidazole-4-carboxamide. Its pathway is amino-acid biosynthesis; L-histidine biosynthesis; L-histidine from 5-phospho-alpha-D-ribose 1-diphosphate: step 4/9. This Baumannia cicadellinicola subsp. Homalodisca coagulata protein is 1-(5-phosphoribosyl)-5-[(5-phosphoribosylamino)methylideneamino] imidazole-4-carboxamide isomerase.